A 313-amino-acid polypeptide reads, in one-letter code: Methionyl-tRNA formyltransferase (313 aa).

111 to 114 (SLLP) contributes to the (6S)-5,6,7,8-tetrahydrofolate binding site.

The protein belongs to the Fmt family.

The catalysed reaction is L-methionyl-tRNA(fMet) + (6R)-10-formyltetrahydrofolate = N-formyl-L-methionyl-tRNA(fMet) + (6S)-5,6,7,8-tetrahydrofolate + H(+). In terms of biological role, attaches a formyl group to the free amino group of methionyl-tRNA(fMet). The formyl group appears to play a dual role in the initiator identity of N-formylmethionyl-tRNA by promoting its recognition by IF2 and preventing the misappropriation of this tRNA by the elongation apparatus. The polypeptide is Methionyl-tRNA formyltransferase (Mesoplasma florum (strain ATCC 33453 / NBRC 100688 / NCTC 11704 / L1) (Acholeplasma florum)).